The primary structure comprises 343 residues: Transmembrane protein 120A (343 aa).

The Cytoplasmic portion of the chain corresponds to 1 to 132 (MHPPPPGPLG…KQAKFAYKDE (132 aa)). Lys130 contacts CoA. A helical membrane pass occupies residues 133 to 152 (YEKFKLYLTIILILISFTCR). The Extracellular segment spans residues 153–158 (FLLNSR). The chain crosses the membrane as a helical span at residues 159–177 (VTDAAFNFLLVWYYCTLTI). Residues 178–190 (RESILINNGSRIK) are Cytoplasmic-facing. Residues Ser187 and Arg188 each coordinate CoA. Residues 191–209 (GWWVFHHYVSTFLSGVMLT) traverse the membrane as a helical segment. Residues 210-218 (WPDGLMYQK) are Extracellular-facing. The helical transmembrane segment at 219 to 240 (FRNQFLSFSMYQSFVQFLQYYY) threads the bilayer. CoA is bound by residues Gln237, Tyr240, Gln241, and His283. Residues 241 to 270 (QSGCLYRLRALGERHTMDLTVEGFQSWMWR) are Cytoplasmic-facing. The helical transmembrane segment at 271-294 (GLTFLLPFLFFGHFWQLFNALTLF) threads the bilayer. The Extracellular segment spans residues 295-304 (NLARDPECKE). A helical transmembrane segment spans residues 305–330 (WQVLMCGFPFLLLFLGNFFTTLRVVH). Residues 331–343 (QKFHNQLHGSKKE) lie on the Cytoplasmic side of the membrane. A CoA-binding site is contributed by Lys332.

It belongs to the TMEM120 family. In terms of assembly, homodimer. Forms heterooligomer with TMEM120B. Interacts with PKD2; TMEM120A inhibits PKD2 channel activity through the physical association of PKD2 with TMEM120A.

The protein localises to the cell membrane. Its subcellular location is the nucleus inner membrane. It localises to the endoplasmic reticulum. Functionally, multifunctional protein involved in mechanosensation, and plays an essential role in lipid metabolism and adipocyte differentiation. May function as an ion channel involved in sensing mechanical stimuli. Mediates the mechanosensitivity of the PKD2-TMEM120A channel complex through direct physical interaction. TMEM120A seems to affect mechanosensation by inhibiting PIEZO2 channels, possibly by altering cellular lipid content. TMEM120A is structurally similar to a lipid-modifying enzyme, ELOVL7, and contains a bound coenzyme A molecule, which suggests it might function as an enzyme in lipid metabolism. Additionnaly, implicated in innate immune response against Zika virus. Acts as a key activator of the antiviral signaling involving STING1. The protein is Transmembrane protein 120A of Bos taurus (Bovine).